We begin with the raw amino-acid sequence, 274 residues long: NH(3)-dependent NAD(+) synthetase (274 aa).

G46–S53 contributes to the ATP binding site. Position 52 (D52) interacts with Mg(2+). A deamido-NAD(+)-binding site is contributed by R140. Residue T160 participates in ATP binding. Position 165 (E165) interacts with Mg(2+). 2 residues coordinate deamido-NAD(+): K173 and D180. 2 residues coordinate ATP: K189 and T211. H260–K261 serves as a coordination point for deamido-NAD(+).

This sequence belongs to the NAD synthetase family. Homodimer.

The enzyme catalyses deamido-NAD(+) + NH4(+) + ATP = AMP + diphosphate + NAD(+) + H(+). It participates in cofactor biosynthesis; NAD(+) biosynthesis; NAD(+) from deamido-NAD(+) (ammonia route): step 1/1. In terms of biological role, catalyzes the ATP-dependent amidation of deamido-NAD to form NAD. Uses ammonia as a nitrogen source. This is NH(3)-dependent NAD(+) synthetase from Streptococcus suis (strain 05ZYH33).